The chain runs to 734 residues: Cleavage stimulation factor subunit 77 (734 aa).

HAT repeat units follow at residues 20–52 (SPIA…AQMA), 54–85 (NNDD…FIRK), 93–128 (EGQE…FLKS), 139–172 (HRKT…FENT), 198–237 (ERKK…FEKG), 246–278 (SSTK…WHVK), 280–312 (GSTD…MEES), 314–345 (GAIQ…FLRR), 347–379 (EGVE…MAFC), 382–414 (KEPK…FLTR), 416–450 (NDDR…FEQT), and 474–505 (EGSS…DLDH). Residues 637-734 (VKQSFAAKGN…FSGELSGSTG (98 aa)) form a disordered region. Over residues 664–677 (LPRDRRATKRKDSD) the composition is skewed to basic and acidic residues. Residues 709–734 (ATSSQTPTGSTSYGSAFSGELSGSTG) are compositionally biased toward polar residues.

In terms of assembly, homodimer. Belongs to the CSTF complex. Forms a complex with cleavage and polyadenylation specificity factor (CPSF) subunits CPSF30, CSTF64, PCFS1, PCFS5 and FIPS5.

It is found in the nucleus. One of the multiple factors required for polyadenylation and 3'-end cleavage of pre-mRNAs. Required for the targeted 3' processing of antisense transcripts that triggers transcriptional silencing of the corresponding sense gene. The polypeptide is Cleavage stimulation factor subunit 77 (Arabidopsis thaliana (Mouse-ear cress)).